We begin with the raw amino-acid sequence, 299 residues long: Nucleophosmin (299 aa).

The span at 125 to 134 (ESSDDEDEEH) shows a compositional bias: acidic residues. The disordered stretch occupies residues 125-247 (ESSDDEDEEH…TPKTPLSSEE (123 aa)). The short motif at 153–158 (PRKKTR) is the Nuclear localization signal element. Positions 160 to 187 (EEEEEDSDEDDDDDEDDDDEDDDEEEEE) are enriched in acidic residues. Residues 188–197 (TPVKKTDSTK) are compositionally biased toward basic and acidic residues. Positions 189-195 (PVKKTDS) match the Nuclear localization signal motif. 4 repeats span residues 218-220 (KTP), 221-223 (KTP), 237-239 (KTP), and 240-242 (KTP). A 4 X 3 AA repeats of K-T-P region spans residues 218–242 (KTPKTPEQKGKQDTKPQTPKTPKTP). Positions 221 to 231 (KTPEQKGKQDT) are enriched in basic and acidic residues. Residues 232 to 242 (KPQTPKTPKTP) show a composition bias toward low complexity.

It belongs to the nucleoplasmin family. Decamer formed by two pentameric rings associated in a head-to-head fashion. In terms of processing, phosphorylated.

Its subcellular location is the cytoplasm. The protein resides in the nucleus. The protein localises to the nucleoplasm. It is found in the nucleolus. Its function is as follows. Acts as a chaperonin for the core histones H3, H2B and H4. Associated with nucleolar ribonucleoprotein structures and bind single-stranded nucleic acids. It may function in the assembly and/or transport of ribosome. May stimulate endonuclease activity on apurinic/apyrimidinic (AP) double-stranded DNA. May inhibit endonuclease activity on AP single-stranded RNA. This chain is Nucleophosmin (npm1), found in Xenopus laevis (African clawed frog).